The sequence spans 131 residues: Histone H2A-beta (131 aa).

N-acetylserine is present on Ser-2. N6-acetyllysine is present on residues Lys-5 and Lys-9. N5-methylglutamine is present on Gln-106. Ser-128 carries the post-translational modification Phosphoserine. The short motif at Ser-128 to Gln-129 is the [ST]-Q motif element.

This sequence belongs to the histone H2A family. As to quaternary structure, the nucleosome is a histone octamer containing two molecules each of H2A, H2B, H3 and H4 assembled in one H3-H4 heterotetramer and two H2A-H2B heterodimers. The octamer wraps approximately 147 bp of DNA. In terms of processing, phosphorylated to form H2AS128ph (gamma-H2A) in response to DNA double-strand breaks (DSBs) generated by exogenous genotoxic agents and by stalled replication forks. Phosphorylation is dependent on the DNA damage checkpoint kinases rad3/ATR and tel1/ATM, spreads on either side of a detected DSB site and may mark the surrounding chromatin for recruitment of proteins required for DNA damage signaling and repair. Gamma-H2A is required for recruiting crb2, a modulator of DNA damage checkpoint signaling, to DSB sites. Gamma-H2A is removed from the DNA prior to the strand invasion-primer extension step of the repair process and subsequently dephosphorylated. Dephosphorylation is necessary for efficient recovery from the DNA damage checkpoint. Post-translationally, acetylated by esa1 to form H2AK4ac and H2AK7ac.

It is found in the nucleus. The protein resides in the chromosome. Functionally, core component of nucleosome which plays a central role in DNA double strand break (DSB) repair. Nucleosomes wrap and compact DNA into chromatin, limiting DNA accessibility to the cellular machineries which require DNA as a template. Histones thereby play a central role in transcription regulation, DNA repair, DNA replication and chromosomal stability. DNA accessibility is regulated via a complex set of post-translational modifications of histones, also called histone code, and nucleosome remodeling. This is Histone H2A-beta (hta2) from Schizosaccharomyces pombe (strain 972 / ATCC 24843) (Fission yeast).